The primary structure comprises 507 residues: MFS transporter fsa7 (507 aa).

The disordered stretch occupies residues 1 to 65; it reads MATKDPAVTT…PDDPEHPLNW (65 aa). Residue N64 is glycosylated (N-linked (GlcNAc...) asparagine). The helical transmembrane segment at 72 to 92 threads the bilayer; that stretch reads LHLVIVSLFTLAANLAATMFA. N106 is a glycosylation site (N-linked (GlcNAc...) asparagine). Helical transmembrane passes span 111–131, 146–166, 169–189, 200–220, and 228–248; these read AMTV…LAPL, FVYI…MFLV, IICG…VADL, ALFT…GGFV, and WTFR…VIFM. N252 carries an N-linked (GlcNAc...) asparagine glycan. Transmembrane regions (helical) follow at residues 302–322, 341–361, 379–399, 406–426, 429–449, and 472–492; these read PIVL…FLLF, GLAY…FSVL, LILM…YGWT, WIVP…VVIP, IYLV…ANLL, and GWGN…PWFF.

This sequence belongs to the major facilitator superfamily.

Its subcellular location is the cell membrane. Its function is as follows. Efflux pump that might be required for efficient secretion of fusarisetin A or other secondary metabolies produced by the fusarisetin A gene cluster. The polypeptide is MFS transporter fsa7 (Fusarium sp. (strain FN080326)).